The chain runs to 192 residues: Thymidine kinase (192 aa).

ATP contacts are provided by residues 9–16 (SAMNAGKT) and 88–91 (DECH). Glu89 (proton acceptor) is an active-site residue. Zn(2+)-binding residues include Cys146, Cys148, Cys183, and His186.

This sequence belongs to the thymidine kinase family. Homotetramer.

It localises to the cytoplasm. The enzyme catalyses thymidine + ATP = dTMP + ADP + H(+). This chain is Thymidine kinase, found in Blochmanniella floridana.